We begin with the raw amino-acid sequence, 168 residues long: Photosystem I assembly protein Ycf3 (168 aa).

TPR repeat units lie at residues A35 to P68, S72 to L105, and G120 to N153.

The protein belongs to the Ycf3 family.

Its subcellular location is the plastid. The protein resides in the chloroplast thylakoid membrane. Functionally, essential for the assembly of the photosystem I (PSI) complex. May act as a chaperone-like factor to guide the assembly of the PSI subunits. This Calycanthus floridus var. glaucus (Eastern sweetshrub) protein is Photosystem I assembly protein Ycf3.